Here is a 321-residue protein sequence, read N- to C-terminus: Cilia- and flagella-associated protein 161 (321 aa).

The disordered stretch occupies residues 275 to 321 (LSTMLDLPKPPAEDTRALEQEREQVSDPGARSTPDARGCVPQCTLPM). Basic and acidic residues predominate over residues 285–299 (PAEDTRALEQEREQV).

As to quaternary structure, microtubule inner protein component of sperm flagellar doublet microtubules. As to expression, expressed in trachea multiciliated cells.

Its subcellular location is the cytoplasm. The protein resides in the cytoskeleton. It is found in the cilium axoneme. It localises to the flagellum axoneme. Its function is as follows. Microtubule inner protein (MIP) part of the dynein-decorated doublet microtubules (DMTs) in cilia axoneme, which is required for motile cilia beating. The polypeptide is Cilia- and flagella-associated protein 161 (Bos taurus (Bovine)).